The primary structure comprises 287 residues: U1 small nuclear ribonucleoprotein A (287 aa).

An RRM 1 domain is found at 16–95; the sequence is HTIYINNLNE…KPMRIQYAKT (80 aa). Residue Lys66 is modified to N6-acetyllysine. The interval 106-134 is disordered; it reads TYVERDRKREKRKPKSQETPAAKKAVQGG. Residues 125 to 134 are compositionally biased toward low complexity; it reads PAAKKAVQGG. Position 157 is an omega-N-methylarginine (Arg157). In terms of domain architecture, RRM 2 spans 213–287; it reads HILFLTNLPE…NAMKISFAKK (75 aa).

The protein belongs to the RRM U1 A/B'' family. As to quaternary structure, U1 snRNP is composed of the 7 core Sm proteins SNRPB, SNRPD1, SNRPD2, SNRPD3, SNRPE, SNRPF and SNRPG that assemble in a heptameric protein ring on the Sm site of the small nuclear RNA to form the core snRNP, and at least three U1 snRNP-specific proteins SNRNP70/U1-70K, SNRPA/U1-A and SNRPC/U1-C. Interacts with SFPQ; component of a snRNP-free complex with SFPQ. Interacts with IVNS1ABP (via BACK domain); the interaction is indirect.

Its subcellular location is the nucleus. Functionally, component of the spliceosomal U1 snRNP, which is essential for recognition of the pre-mRNA 5' splice-site and the subsequent assembly of the spliceosome. U1 snRNP is the first snRNP to interact with pre-mRNA. This interaction is required for the subsequent binding of U2 snRNP and the U4/U6/U5 tri-snRNP. SNRPA binds stem loop II of U1 snRNA. In a snRNP-free form (SF-A) may be involved in coupled pre-mRNA splicing and polyadenylation process. May bind preferentially to the 5'-UGCAC-3' motif on RNAs. In Mus musculus (Mouse), this protein is U1 small nuclear ribonucleoprotein A (Snrpa).